A 288-amino-acid polypeptide reads, in one-letter code: Syntaxin PEP12 (288 aa).

At 1-268 the chain is on the cytoplasmic side; that stretch reads MSEDEFFGGD…RYQKRTSRWR (268 aa). Phosphoserine occurs at positions 2 and 23. The t-SNARE coiled-coil homology domain maps to 195 to 257; that stretch reads QNLIEQRDQE…QLASDELRKA (63 aa). A helical; Anchor for type IV membrane protein transmembrane segment spans residues 269–288; sequence VYLLIVLLVMLLFIFLIMKL.

It belongs to the syntaxin family. In terms of processing, ubiquitinated.

It localises to the membrane. In terms of biological role, plays a role in the sorting and targeting of vacuolar proteases. The chain is Syntaxin PEP12 (PEP12) from Saccharomyces cerevisiae (strain ATCC 204508 / S288c) (Baker's yeast).